The following is a 299-amino-acid chain: MSMPVPQVVEVFAPAKINLTLHVTGQRPDGYHLLDSLVAFADVGDVLRLEPADVWQMKTVGPEAEAVPDGAENLVLKAAALLDGAPKAAFTLTKNLPVASGIGGGSADAAAAFRGLCAATPHHDPNNIDTQRRLLSLGADIPMCLHCVTARITGIGEEITPVAQFPALHAVLINPRVAVSTPAVFKAMKQRNNPPMPDIPPESCDVKDLVEWLRAQRNDMQEAATTLEPAIATVQAALEGHRACQLARMSGSGATCFGLFHTAQAAQQAARDLSRDYPQWWIRPTQLGSQAERAVPRLS.

The active site involves Lys16. 97-107 (PVASGIGGGSA) provides a ligand contact to ATP. Asp140 is an active-site residue.

Belongs to the GHMP kinase family. IspE subfamily.

The enzyme catalyses 4-CDP-2-C-methyl-D-erythritol + ATP = 4-CDP-2-C-methyl-D-erythritol 2-phosphate + ADP + H(+). The protein operates within isoprenoid biosynthesis; isopentenyl diphosphate biosynthesis via DXP pathway; isopentenyl diphosphate from 1-deoxy-D-xylulose 5-phosphate: step 3/6. Its function is as follows. Catalyzes the phosphorylation of the position 2 hydroxy group of 4-diphosphocytidyl-2C-methyl-D-erythritol. The protein is 4-diphosphocytidyl-2-C-methyl-D-erythritol kinase of Roseobacter denitrificans (strain ATCC 33942 / OCh 114) (Erythrobacter sp. (strain OCh 114)).